Consider the following 192-residue polypeptide: Orotate phosphoribosyltransferase (192 aa).

5-phospho-alpha-D-ribose 1-diphosphate is bound by residues R102, K103, K106, and 129 to 137 (EDVVTTGRS). 2 residues coordinate orotate: T133 and R161.

It belongs to the purine/pyrimidine phosphoribosyltransferase family. PyrE subfamily. As to quaternary structure, homodimer. Mg(2+) serves as cofactor.

It catalyses the reaction orotidine 5'-phosphate + diphosphate = orotate + 5-phospho-alpha-D-ribose 1-diphosphate. It functions in the pathway pyrimidine metabolism; UMP biosynthesis via de novo pathway; UMP from orotate: step 1/2. In terms of biological role, catalyzes the transfer of a ribosyl phosphate group from 5-phosphoribose 1-diphosphate to orotate, leading to the formation of orotidine monophosphate (OMP). This Prochlorococcus marinus (strain SARG / CCMP1375 / SS120) protein is Orotate phosphoribosyltransferase.